The sequence spans 65 residues: Potassium channel toxin alpha-KTx 12.6 (65 aa).

A signal peptide spans 1–22; the sequence is MKMKIFIITIVIALFITSIVEA. 3 disulfide bridges follow: Cys-30-Cys-51, Cys-36-Cys-56, and Cys-40-Cys-58.

This sequence belongs to the short scorpion toxin superfamily. Potassium channel inhibitor family. Alpha-KTx 12 subfamily. Expressed by the venom gland.

It is found in the secreted. In terms of biological role, inhibits voltage-gated potassium channels. The chain is Potassium channel toxin alpha-KTx 12.6 from Lychas mucronatus (Chinese swimming scorpion).